The chain runs to 290 residues: GTPase Era (290 aa).

Positions 2–169 (KSGFVSIIGR…KDKIYANLQE (168 aa)) constitute an Era-type G domain. The interval 10-17 (GRPSTGKS) is G1. 10–17 (GRPSTGKS) serves as a coordination point for GTP. Residues 36-40 (QTTRN) form a G2 region. The segment at 57–60 (DTPG) is G3. GTP-binding positions include 57–61 (DTPGF) and 119–122 (NKID). Residues 119-122 (NKID) are G4. The tract at residues 148–150 (ISA) is G5. Positions 200 to 276 (LKEELPYSLY…DLFLQVKLRK (77 aa)) constitute a KH type-2 domain.

It belongs to the TRAFAC class TrmE-Era-EngA-EngB-Septin-like GTPase superfamily. Era GTPase family. In terms of assembly, monomer.

Its subcellular location is the cytoplasm. The protein resides in the cell inner membrane. An essential GTPase that binds both GDP and GTP, with rapid nucleotide exchange. Plays a role in 16S rRNA processing and 30S ribosomal subunit biogenesis and possibly also in cell cycle regulation and energy metabolism. This Borrelia hermsii (strain HS1 / DAH) protein is GTPase Era.